Reading from the N-terminus, the 312-residue chain is Deoxyribonuclease-1-like 1 (312 aa).

A signal peptide spans 1-35 (MPSGQPVFPRRVPDAYIAMRGLVVASLLILLVGGT). N-linked (GlcNAc...) asparagine glycosylation occurs at N102. Residue E113 is part of the active site. Residue N133 is glycosylated (N-linked (GlcNAc...) asparagine). H164 is a catalytic residue. An intrachain disulfide couples C203 to C240. N239 carries an N-linked (GlcNAc...) asparagine glycan.

Belongs to the DNase I family.

It is found in the endoplasmic reticulum. The protein is Deoxyribonuclease-1-like 1 (Dnase1l1) of Rattus norvegicus (Rat).